The chain runs to 168 residues: Cell division inhibitor SulA (168 aa).

Residues 106–112 (ALLTGNY) form a ftsZ binding region. Residues 161–168 (KIHSSLYH) are lon protease binding.

It belongs to the SulA family. As to quaternary structure, interacts with FtsZ. Is rapidly cleaved and degraded by the Lon protease once DNA damage is repaired.

Component of the SOS system and an inhibitor of cell division. Accumulation of SulA causes rapid cessation of cell division and the appearance of long, non-septate filaments. In the presence of GTP, binds a polymerization-competent form of FtsZ in a 1:1 ratio, thus inhibiting FtsZ polymerization and therefore preventing it from participating in the assembly of the Z ring. This mechanism prevents the premature segregation of damaged DNA to daughter cells during cell division. The chain is Cell division inhibitor SulA from Serratia proteamaculans (strain 568).